The primary structure comprises 280 residues: Tryptophan synthase alpha chain (280 aa).

Catalysis depends on proton acceptor residues glutamate 49 and aspartate 60.

The protein belongs to the TrpA family. Tetramer of two alpha and two beta chains.

The catalysed reaction is (1S,2R)-1-C-(indol-3-yl)glycerol 3-phosphate + L-serine = D-glyceraldehyde 3-phosphate + L-tryptophan + H2O. The protein operates within amino-acid biosynthesis; L-tryptophan biosynthesis; L-tryptophan from chorismate: step 5/5. Functionally, the alpha subunit is responsible for the aldol cleavage of indoleglycerol phosphate to indole and glyceraldehyde 3-phosphate. This chain is Tryptophan synthase alpha chain, found in Corynebacterium glutamicum (strain ATCC 13032 / DSM 20300 / JCM 1318 / BCRC 11384 / CCUG 27702 / LMG 3730 / NBRC 12168 / NCIMB 10025 / NRRL B-2784 / 534).